Consider the following 456-residue polypeptide: MAFAETYPAASSLPNGDCGRPRARPGGNRVTVVLGAQWGDEGKGKVVDLLAQDADIVCRCQGGNNAGHTVVVDSVEYDFHLLPSGIINPNVTAFIGNGVVIHLPGLFEEAEKNVQKGKGLEGWEKRLIISDRAHIVFDFHQAADGIQEQQRQEQAGKNLGTTKKGIGPVYSSKAARSGLRMCDLVSDFDGFSERFKVLANQYKSIYPTLEIDIEGELQKLKGYMEKIKPMVRDGVYFLYEALHGPPKKILVEGANAALLDIDFGTYPFVTSSNCTVGGVCTGLGMPPQNVGEVYGVVKAYTTRVGIGAFPTEQDNEIGELLQTRGREFGVTTGRKRRCGWLDLVLLKYAHMINGFTALALTKLDILDMFTEIKVGVAYKLDGEIIPHIPANQEVLNKVEVQYKTLPGWNTDISNARAFKELPVNAQNYVRFIEDELQIPVKWIGVGKSRESMIQLF.

The tract at residues 1-24 (MAFAETYPAASSLPNGDCGRPRAR) is disordered. GTP is bound by residues 39–45 (GDEGKGK) and 67–69 (GHT). Catalysis depends on Asp-40, which acts as the Proton acceptor. Residues Asp-40 and Gly-67 each coordinate Mg(2+). Asp-40 lines the substrate pocket. IMP is bound by residues 40–43 (DEGK), 65–68 (NAGH), Thr-162, Arg-176, Asn-255, Thr-270, and Arg-334. His-68 functions as the Proton donor in the catalytic mechanism. Residue 330–336 (VTTGRKR) coordinates substrate. GTP-binding positions include Arg-336, 362-364 (KLD), and 444-447 (GVGK).

It belongs to the adenylosuccinate synthetase family. In terms of assembly, homodimer. Mg(2+) serves as cofactor.

Its subcellular location is the cytoplasm. The protein resides in the mitochondrion. The catalysed reaction is IMP + L-aspartate + GTP = N(6)-(1,2-dicarboxyethyl)-AMP + GDP + phosphate + 2 H(+). It functions in the pathway purine metabolism; AMP biosynthesis via de novo pathway; AMP from IMP: step 1/2. Inhibited competitively by AMP and IMP and non-competitively by fructose 1,6-bisphosphate. In terms of biological role, plays an important role in the de novo pathway and in the salvage pathway of purine nucleotide biosynthesis. Catalyzes the first committed step in the biosynthesis of AMP from IMP. This chain is Adenylosuccinate synthetase isozyme 2, found in Homo sapiens (Human).